Here is a 479-residue protein sequence, read N- to C-terminus: Ribosomal RNA small subunit methyltransferase F (479 aa).

S-adenosyl-L-methionine is bound by residues 125-131 (AAAPGSK), Glu149, Asp176, and Asp194. Cys247 (nucleophile) is an active-site residue.

Belongs to the class I-like SAM-binding methyltransferase superfamily. RsmB/NOP family.

The protein resides in the cytoplasm. It catalyses the reaction cytidine(1407) in 16S rRNA + S-adenosyl-L-methionine = 5-methylcytidine(1407) in 16S rRNA + S-adenosyl-L-homocysteine + H(+). In terms of biological role, specifically methylates the cytosine at position 1407 (m5C1407) of 16S rRNA. The sequence is that of Ribosomal RNA small subunit methyltransferase F from Escherichia coli (strain UTI89 / UPEC).